Consider the following 190-residue polypeptide: GTP cyclohydrolase 1 (190 aa).

The Zn(2+) site is built by Cys75, His78, and Cys146.

This sequence belongs to the GTP cyclohydrolase I family. As to quaternary structure, homomer.

It carries out the reaction GTP + H2O = 7,8-dihydroneopterin 3'-triphosphate + formate + H(+). The protein operates within cofactor biosynthesis; 7,8-dihydroneopterin triphosphate biosynthesis; 7,8-dihydroneopterin triphosphate from GTP: step 1/1. The sequence is that of GTP cyclohydrolase 1 from Campylobacter jejuni subsp. jejuni serotype O:6 (strain 81116 / NCTC 11828).